The chain runs to 346 residues: Propane 2-monooxygenase, reductase component (346 aa).

One can recognise a 2Fe-2S ferredoxin-type domain in the interval 5–94 (HKISFEPVDI…DCEIELLNFD (90 aa)). The [2Fe-2S] cluster site is built by C39, C44, C46, and C78. The FAD-binding FR-type domain occupies 104–205 (IQDVTTKVAA…NGPYGSCTLR (102 aa)).

This sequence belongs to the bacterial ring-hydroxylating dioxygenase ferredoxin reductase family. In terms of assembly, the propane 2-monooxygenase multicomponent enzyme system is composed of an electron transfer component and a monooxygenase component interacting with the effector protein PrmD. The electron transfer component is composed of a reductase (PrmB), and the monooxygenase component is formed by a large subunit (PrmA) and a small subunit (PrmC). Requires FAD as cofactor. The cofactor is [2Fe-2S] cluster.

Reductase component of the propane 2-monooxygenase multicomponent enzyme system which is involved in the degradation of propane via the O2-dependent hydroxylation of propane. Reductase catalyzes the transfer of electrons from NADH or NADPH to monooxygenase. The chain is Propane 2-monooxygenase, reductase component from Gordonia sp. (strain TY-5).